We begin with the raw amino-acid sequence, 143 residues long: Ribosome-binding factor A (143 aa).

The interval 119–143 (KAKQQQFTPDTPDNSESVDGEKEQD) is disordered. The segment covering 122–133 (QQQFTPDTPDNS) has biased composition (polar residues).

It belongs to the RbfA family. Monomer. Binds 30S ribosomal subunits, but not 50S ribosomal subunits or 70S ribosomes.

It is found in the cytoplasm. One of several proteins that assist in the late maturation steps of the functional core of the 30S ribosomal subunit. Associates with free 30S ribosomal subunits (but not with 30S subunits that are part of 70S ribosomes or polysomes). Required for efficient processing of 16S rRNA. May interact with the 5'-terminal helix region of 16S rRNA. The sequence is that of Ribosome-binding factor A from Shewanella frigidimarina (strain NCIMB 400).